We begin with the raw amino-acid sequence, 164 residues long: MYIEMIDETNQVSEEIKNQTLDILEFAAQKTGKEDKEMAVTFVTNERSHELNLKYRDTNRPTDVISLEYKPESSLSFDEEDLADDPDLAEVLTEFDAYIGELFISVDKAREQAQEYGHSFEREMGFLAVHGFLHINGYDHYTPQEEKEMFSLQEEILDAYGLKR.

Residues histidine 130, histidine 134, and histidine 140 each coordinate Zn(2+).

Belongs to the endoribonuclease YbeY family. The cofactor is Zn(2+).

It is found in the cytoplasm. Functionally, single strand-specific metallo-endoribonuclease involved in late-stage 70S ribosome quality control and in maturation of the 3' terminus of the 16S rRNA. This is Endoribonuclease YbeY from Streptococcus mutans serotype c (strain ATCC 700610 / UA159).